A 382-amino-acid polypeptide reads, in one-letter code: Pyrimidine monooxygenase RutA (382 aa).

Residues 68-69 (IK), N134, E143, 159-160 (RY), and S209 each bind FMN.

This sequence belongs to the NtaA/SnaA/DszA monooxygenase family. RutA subfamily.

The enzyme catalyses uracil + FMNH2 + NADH + O2 = (Z)-3-ureidoacrylate + FMN + NAD(+) + H2O + H(+). It catalyses the reaction thymine + FMNH2 + NADH + O2 = (Z)-2-methylureidoacrylate + FMN + NAD(+) + H2O + H(+). Functionally, catalyzes the pyrimidine ring opening between N-3 and C-4 by an unusual flavin hydroperoxide-catalyzed mechanism, adding oxygen atoms in the process to yield ureidoacrylate peracid, that immediately reacts with FMN forming ureidoacrylate and FMN-N(5)-oxide. The FMN-N(5)-oxide reacts spontaneously with NADH to produce FMN. Requires the flavin reductase RutF to regenerate FMN in vivo. The sequence is that of Pyrimidine monooxygenase RutA from Escherichia coli (strain K12 / MC4100 / BW2952).